A 260-amino-acid chain; its full sequence is Thiamine thiazole synthase (260 aa).

NAD(+) contacts are provided by residues Ala-36, 55 to 56 (EQ), Gly-63, and 154 to 156 (HVD). Residues Asp-156 and His-171 each contribute to the Fe cation site. Met-224 lines the NAD(+) pocket. Arg-234 is a binding site for glycine.

This sequence belongs to the THI4 family. In terms of assembly, homooctamer; tetramer of dimers. Requires Fe(2+) as cofactor.

It carries out the reaction hydrogen sulfide + glycine + NAD(+) = ADP-5-ethyl-4-methylthiazole-2-carboxylate + nicotinamide + 3 H2O + H(+). Its pathway is cofactor biosynthesis; thiamine diphosphate biosynthesis. Its function is as follows. Involved in the biosynthesis of the thiazole moiety of thiamine. Catalyzes the conversion of NAD and glycine to adenosine diphosphate 5-(2-hydroxyethyl)-4-methylthiazole-2-carboxylate (ADT), an adenylated thiazole intermediate, using free sulfide as a source of sulfur. The sequence is that of Thiamine thiazole synthase from Methanosarcina acetivorans (strain ATCC 35395 / DSM 2834 / JCM 12185 / C2A).